A 358-amino-acid polypeptide reads, in one-letter code: Chorismate synthase (358 aa).

An NADP(+)-binding site is contributed by Arg47. FMN is bound by residues 124 to 126 (RSS), 240 to 241 (NA), Gly284, 299 to 303 (KPIAT), and Arg325.

It belongs to the chorismate synthase family. As to quaternary structure, homotetramer. It depends on FMNH2 as a cofactor.

The enzyme catalyses 5-O-(1-carboxyvinyl)-3-phosphoshikimate = chorismate + phosphate. Its pathway is metabolic intermediate biosynthesis; chorismate biosynthesis; chorismate from D-erythrose 4-phosphate and phosphoenolpyruvate: step 7/7. Catalyzes the anti-1,4-elimination of the C-3 phosphate and the C-6 proR hydrogen from 5-enolpyruvylshikimate-3-phosphate (EPSP) to yield chorismate, which is the branch point compound that serves as the starting substrate for the three terminal pathways of aromatic amino acid biosynthesis. This reaction introduces a second double bond into the aromatic ring system. This is Chorismate synthase from Bacteroides thetaiotaomicron (strain ATCC 29148 / DSM 2079 / JCM 5827 / CCUG 10774 / NCTC 10582 / VPI-5482 / E50).